The following is a 93-amino-acid chain: Small ribosomal subunit protein bS18 (93 aa).

This sequence belongs to the bacterial ribosomal protein bS18 family. Part of the 30S ribosomal subunit. Forms a tight heterodimer with protein bS6.

In terms of biological role, binds as a heterodimer with protein bS6 to the central domain of the 16S rRNA, where it helps stabilize the platform of the 30S subunit. In Verminephrobacter eiseniae (strain EF01-2), this protein is Small ribosomal subunit protein bS18.